The chain runs to 342 residues: GTPase Obg (342 aa).

The Obg domain maps to 1-159 (MKFLDLCKVY…RTIWLRLKLI (159 aa)). The OBG-type G domain maps to 160-327 (ADAGLLGLPN…VLRALWAEID (168 aa)). GTP is bound by residues 166–173 (GLPNAGKS), 191–195 (FTTLV), 212–215 (DIPG), 279–282 (NKID), and 308–310 (SGV). 2 residues coordinate Mg(2+): Ser-173 and Thr-193.

The protein belongs to the TRAFAC class OBG-HflX-like GTPase superfamily. OBG GTPase family. In terms of assembly, monomer. Mg(2+) serves as cofactor.

The protein resides in the cytoplasm. Its function is as follows. An essential GTPase which binds GTP, GDP and possibly (p)ppGpp with moderate affinity, with high nucleotide exchange rates and a fairly low GTP hydrolysis rate. Plays a role in control of the cell cycle, stress response, ribosome biogenesis and in those bacteria that undergo differentiation, in morphogenesis control. In Cereibacter sphaeroides (strain ATCC 17025 / ATH 2.4.3) (Rhodobacter sphaeroides), this protein is GTPase Obg.